We begin with the raw amino-acid sequence, 431 residues long: MASSLLEEEVHYGSSPLAMLTAACSKFGGSSPLRDSTTLGKAGTKKPYSVGSDLSASKTMGDAYPAPFTSTNGLLSPAGSPPAPTSGYANDYPPFSHSFPGPTGTQDPGLLVPKGHSSSDCLPSVYTSLDMTHPYGSWYKAGIHAGISPGPGNTPTPWWDMHPGGNWLGGGQGQGDGLQGTLPTGPAQPPLNPQLPTYPSDFAPLNPAPYPAPHLLQPGPQHVLPQDVYKPKAVGNSGQLEGSGGAKPPRGASTGGSGGYGGSGAGRSSCDCPNCQELERLGAAAAGLRKKPIHSCHIPGCGKVYGKASHLKAHLRWHTGERPFVCNWLFCGKRFTRSDELERHVRTHTREKKFTCLLCSKRFTRSDHLSKHQRTHGEPGPGPPPSGPKELGEGRSTGEEEASQTPRPSASPATPEKAPGGSPEQSNLLEI.

The tract at residues 30 to 56 is disordered; sequence SSPLRDSTTLGKAGTKKPYSVGSDLSA. Lysine 41 and lysine 45 each carry N6-propionyllysine. Residue lysine 58 forms a Glycyl lysine isopeptide (Lys-Gly) (interchain with G-Cter in ubiquitin) linkage. 2 disordered regions span residues 71–115 and 154–260; these read TNGL…VPKG and TPTP…SGGY. The short motif at 156–164 is the 9aaTAD element; it reads TPWWDMHPG. The span at 166–178 shows a compositional bias: gly residues; that stretch reads NWLGGGQGQGDGL. Lysine 230 is covalently cross-linked (Glycyl lysine isopeptide (Lys-Gly) (interchain with G-Cter in ubiquitin)). C2H2-type zinc fingers lie at residues 294 to 318, 324 to 348, and 354 to 376; these read HSCHIPGCGKVYGKASHLKAHLRWH, FVCNWLFCGKRFTRSDELERHVRTH, and FTCLLCSKRFTRSDHLSKHQRTH. N6-propionyllysine occurs at positions 361 and 371. Residues 367–431 are disordered; sequence DHLSKHQRTH…SPEQSNLLEI (65 aa). Positions 403–412 are enriched in polar residues; the sequence is SQTPRPSASP.

Belongs to the Sp1 C2H2-type zinc-finger protein family. Interacts with RIOX1; the interaction is direct and inhibits transcription activator activity. Ubiquitination at leads to proteasomal degradation. SP7 is a short-live protein with an endogenous half-life of approximately 12 hours. Post-translationally, propionylated. Depropionylation at Lys-371 by SIRT7 activates transcription factor activity and positively regulates bone formation by osteoblasts. As to expression, restricted to bone-derived cell.

The protein localises to the nucleus. Functionally, transcriptional activator essential for osteoblast differentiation. Binds to SP1 and EKLF consensus sequences and to other G/C-rich sequences. This is Transcription factor Sp7 (SP7) from Homo sapiens (Human).